We begin with the raw amino-acid sequence, 192 residues long: Phosphoheptose isomerase (192 aa).

The region spanning 35–192 is the SIS domain; sequence LIETLENQGK…CIERHFAHKN (158 aa). 50–52 is a binding site for substrate; that stretch reads NGG. Residues H59 and E63 each contribute to the Zn(2+) site. Residues E63, 92 to 93, 118 to 120, S123, and Q170 each bind substrate; these read ND and STS. Residues Q170 and H178 each contribute to the Zn(2+) site.

It belongs to the SIS family. GmhA subfamily. Homotetramer. Zn(2+) serves as cofactor.

It is found in the cytoplasm. It catalyses the reaction 2 D-sedoheptulose 7-phosphate = D-glycero-alpha-D-manno-heptose 7-phosphate + D-glycero-beta-D-manno-heptose 7-phosphate. The protein operates within carbohydrate biosynthesis; D-glycero-D-manno-heptose 7-phosphate biosynthesis; D-glycero-alpha-D-manno-heptose 7-phosphate and D-glycero-beta-D-manno-heptose 7-phosphate from sedoheptulose 7-phosphate: step 1/1. It functions in the pathway bacterial outer membrane biogenesis; LPS core biosynthesis. In terms of biological role, catalyzes the isomerization of sedoheptulose 7-phosphate in D-glycero-D-manno-heptose 7-phosphate. In Helicobacter pylori (strain ATCC 700392 / 26695) (Campylobacter pylori), this protein is Phosphoheptose isomerase.